A 451-amino-acid polypeptide reads, in one-letter code: Chromosomal replication initiator protein DnaA (451 aa).

The tract at residues 1–101 (MTENETIFWN…TSNHIFSRQT (101 aa)) is domain I, interacts with DnaA modulators. Positions 101–110 (TINSLPAITS) are domain II. The segment at 111–329 (DLNPKYSFDN…GALKDISLVA (219 aa)) is domain III, AAA+ region. Residues G155, G157, K158, and T159 each contribute to the ATP site. The domain IV, binds dsDNA stretch occupies residues 330 to 451 (NFKEIDKITV…EIETIKNKIK (122 aa)).

Belongs to the DnaA family. As to quaternary structure, oligomerizes as a right-handed, spiral filament on DNA at oriC.

The protein localises to the cytoplasm. Functionally, plays an essential role in the initiation and regulation of chromosomal replication. ATP-DnaA binds to the origin of replication (oriC) to initiate formation of the DNA replication initiation complex once per cell cycle. Binds the DnaA box (a 9 base pair repeat at the origin) and separates the double-stranded (ds)DNA. Forms a right-handed helical filament on oriC DNA; dsDNA binds to the exterior of the filament while single-stranded (ss)DNA is stabiized in the filament's interior. The ATP-DnaA-oriC complex binds and stabilizes one strand of the AT-rich DNA unwinding element (DUE), permitting loading of DNA polymerase. After initiation quickly degrades to an ADP-DnaA complex that is not apt for DNA replication. Binds acidic phospholipids. This Streptococcus uberis (strain ATCC BAA-854 / 0140J) protein is Chromosomal replication initiator protein DnaA.